The sequence spans 284 residues: MASQFMKNLKEEVTCPVCLNLMVKPVSADCGHTFCQGCITLYFESIKCDKKVFICPVCRISYQFSNLRPNRNVANIVERLKMFKPSPEEEQKVFNCARHGKKLQLFCRKDMMAICWLCERSQEHRGHKTALIEEVAQEYKEQLQVVLQRLMADKKKFENWKDDLQKDRTYWENQIQKDVQNVRSEFKRMRDIMDSEEKKELQKLRQEKEDILNNLAESESEHAQQSKLLEDFISDVEHQLQCSDIEILQVRLQDVPGSESQKAWKPLPFLSAAVVFLVMTVSSS.

The RING-type zinc-finger motif lies at 15 to 59 (CPVCLNLMVKPVSADCGHTFCQGCITLYFESIKCDKKVFICPVCR). Residues 91–132 (QKVFNCARHGKKLQLFCRKDMMAICWLCERSQEHRGHKTALI) form a B box-type zinc finger. Positions 96, 99, 118, and 124 each coordinate Zn(2+). A coiled-coil region spans residues 130 to 234 (ALIEEVAQEY…QSKLLEDFIS (105 aa)).

It belongs to the TRIM/RBCC family. In terms of tissue distribution, expressed in embryonic CNS, liver, kidney, olfactory epithelium.

Its subcellular location is the cytoplasm. The chain is Tripartite motif-containing protein 12A (Trim12a) from Mus musculus (Mouse).